Consider the following 165-residue polypeptide: Short form salivary protein D7R1 (165 aa).

The N-terminal stretch at Met-1–Ala-21 is a signal peptide. 3 disulfides stabilise this stretch: Cys-27–Cys-59, Cys-40–Cys-164, and Cys-98–Cys-117. Serotonin is bound by residues Glu-28, His-56, Tyr-115, Asp-132, and Glu-135. Positions 115, 132, and 135 each coordinate histamine.

Belongs to the PBP/GOBP family. As to expression, female salivary gland. Not detected in female carcass without salivary glands. Not detected in male tissues.

It is found in the secreted. Functionally, modulates blood feeding of female mosquitoes on vertebrate species by binding and sequestering different mediators involved in the host response. Binds serotonin and histamine. Increases blood clotting time. This is Short form salivary protein D7R1 from Anopheles gambiae (African malaria mosquito).